The chain runs to 470 residues: 3-isopropylmalate dehydratase large subunit (470 aa).

Residues cysteine 351, cysteine 411, and cysteine 414 each coordinate [4Fe-4S] cluster.

This sequence belongs to the aconitase/IPM isomerase family. LeuC type 1 subfamily. As to quaternary structure, heterodimer of LeuC and LeuD. [4Fe-4S] cluster serves as cofactor.

It catalyses the reaction (2R,3S)-3-isopropylmalate = (2S)-2-isopropylmalate. It participates in amino-acid biosynthesis; L-leucine biosynthesis; L-leucine from 3-methyl-2-oxobutanoate: step 2/4. Its function is as follows. Catalyzes the isomerization between 2-isopropylmalate and 3-isopropylmalate, via the formation of 2-isopropylmaleate. In Rhodopseudomonas palustris (strain HaA2), this protein is 3-isopropylmalate dehydratase large subunit.